Reading from the N-terminus, the 344-residue chain is tRNA N6-adenosine threonylcarbamoyltransferase (344 aa).

Fe cation-binding residues include His-111 and His-115. Substrate is bound by residues Leu-134–Gly-138, Asp-167, Gly-180, and Asn-277. Asp-305 contributes to the Fe cation binding site.

This sequence belongs to the KAE1 / TsaD family. It depends on Fe(2+) as a cofactor.

It localises to the cytoplasm. The enzyme catalyses L-threonylcarbamoyladenylate + adenosine(37) in tRNA = N(6)-L-threonylcarbamoyladenosine(37) in tRNA + AMP + H(+). In terms of biological role, required for the formation of a threonylcarbamoyl group on adenosine at position 37 (t(6)A37) in tRNAs that read codons beginning with adenine. Is involved in the transfer of the threonylcarbamoyl moiety of threonylcarbamoyl-AMP (TC-AMP) to the N6 group of A37, together with TsaE and TsaB. TsaD likely plays a direct catalytic role in this reaction. The chain is tRNA N6-adenosine threonylcarbamoyltransferase from Glaesserella parasuis serovar 5 (strain SH0165) (Haemophilus parasuis).